Reading from the N-terminus, the 210-residue chain is Glycerol-3-phosphate acyltransferase (210 aa).

The next 5 membrane-spanning stretches (helical) occupy residues 1 to 21 (MLLS…FPAG), 53 to 73 (GPAL…VVAA), 87 to 107 (IAWL…LPVW), 122 to 142 (VLLA…LLLL), and 147 to 167 (IVSL…LILP).

It belongs to the PlsY family. Probably interacts with PlsX.

The protein resides in the cell inner membrane. It carries out the reaction an acyl phosphate + sn-glycerol 3-phosphate = a 1-acyl-sn-glycero-3-phosphate + phosphate. Its pathway is lipid metabolism; phospholipid metabolism. Functionally, catalyzes the transfer of an acyl group from acyl-phosphate (acyl-PO(4)) to glycerol-3-phosphate (G3P) to form lysophosphatidic acid (LPA). This enzyme utilizes acyl-phosphate as fatty acyl donor, but not acyl-CoA or acyl-ACP. The chain is Glycerol-3-phosphate acyltransferase from Synechococcus elongatus (strain ATCC 33912 / PCC 7942 / FACHB-805) (Anacystis nidulans R2).